Here is a 579-residue protein sequence, read N- to C-terminus: Chromosomal replication initiator protein DnaA (579 aa).

Positions 1 to 71 (MQDFWQAAAA…TALACEYWET (71 aa)) are domain I, interacts with DnaA modulators. A domain II region spans residues 71-242 (TQVSVHFVLD…QQSDTVHERS (172 aa)). Disordered stretches follow at residues 131–196 (AGAQ…SAAH) and 212–240 (EASA…TVHE). Low complexity predominate over residues 171-183 (SQSQQSAQGRGAA). The segment at 243–459 (RLNPILTFDN…GALRKILAFS (217 aa)) is domain III, AAA+ region. ATP is bound by residues G287, G289, K290, and T291. The segment at 460 to 579 (NFHGKDITID…LHVLEQTLKG (120 aa)) is domain IV, binds dsDNA.

This sequence belongs to the DnaA family. As to quaternary structure, oligomerizes as a right-handed, spiral filament on DNA at oriC.

Its subcellular location is the cytoplasm. Functionally, plays an essential role in the initiation and regulation of chromosomal replication. ATP-DnaA binds to the origin of replication (oriC) to initiate formation of the DNA replication initiation complex once per cell cycle. Binds the DnaA box (a 9 base pair repeat at the origin) and separates the double-stranded (ds)DNA. Forms a right-handed helical filament on oriC DNA; dsDNA binds to the exterior of the filament while single-stranded (ss)DNA is stabiized in the filament's interior. The ATP-DnaA-oriC complex binds and stabilizes one strand of the AT-rich DNA unwinding element (DUE), permitting loading of DNA polymerase. After initiation quickly degrades to an ADP-DnaA complex that is not apt for DNA replication. Binds acidic phospholipids. This Cupriavidus metallidurans (strain ATCC 43123 / DSM 2839 / NBRC 102507 / CH34) (Ralstonia metallidurans) protein is Chromosomal replication initiator protein DnaA.